Reading from the N-terminus, the 413-residue chain is O-methyltransferase kntB (413 aa).

Residues 255 to 256, D280, 302 to 303, and R319 each bind S-adenosyl-L-methionine; these read GG and NF. The active-site Proton acceptor is H322.

This sequence belongs to the class I-like SAM-binding methyltransferase superfamily. Cation-independent O-methyltransferase family. S-adenosyl-L-methionine serves as cofactor.

It functions in the pathway secondary metabolite biosynthesis. Non-reducing polyketide synthase; part of the gene cluster that mediates the biosynthesis of the bicoumarin kotanin. The non-reducing polyketide synthase ktnS first catalyzes the formation of the pentaketidic 4,7-dihydroxy-5-methylcoumarin from acetyl coenzyme A and 4 malonyl coenzyme A molecules. Further O-methylation by ktnB leads to the formation of 7-demethylsiderin. Then, an oxidative phenol coupling catalyzed by the cytochrome P450 monooxygenase ktnC forms the 8,8'-dimer P-orlandin via dimerization the monomeric precursor, 7-demethylsiderin. P-orlandin is subsequently O-methylated in a stepwise fashion to demethylkotanin and kotanin. This chain is O-methyltransferase kntB, found in Aspergillus niger (strain ATCC MYA-4892 / CBS 513.88 / FGSC A1513).